An 81-amino-acid chain; its full sequence is Small ribosomal subunit protein bS16 (81 aa).

This sequence belongs to the bacterial ribosomal protein bS16 family.

The sequence is that of Small ribosomal subunit protein bS16 from Clostridium acetobutylicum (strain ATCC 824 / DSM 792 / JCM 1419 / IAM 19013 / LMG 5710 / NBRC 13948 / NRRL B-527 / VKM B-1787 / 2291 / W).